A 300-amino-acid polypeptide reads, in one-letter code: tRNA-cytidine(32) 2-sulfurtransferase (300 aa).

The PP-loop motif signature appears at 57 to 62; sequence SGGKDS. 3 residues coordinate [4Fe-4S] cluster: Cys132, Cys135, and Cys223.

It belongs to the TtcA family. In terms of assembly, homodimer. Requires Mg(2+) as cofactor. [4Fe-4S] cluster serves as cofactor.

It is found in the cytoplasm. The enzyme catalyses cytidine(32) in tRNA + S-sulfanyl-L-cysteinyl-[cysteine desulfurase] + AH2 + ATP = 2-thiocytidine(32) in tRNA + L-cysteinyl-[cysteine desulfurase] + A + AMP + diphosphate + H(+). The protein operates within tRNA modification. Functionally, catalyzes the ATP-dependent 2-thiolation of cytidine in position 32 of tRNA, to form 2-thiocytidine (s(2)C32). The sulfur atoms are provided by the cysteine/cysteine desulfurase (IscS) system. The polypeptide is tRNA-cytidine(32) 2-sulfurtransferase (Xanthomonas campestris pv. campestris (strain 8004)).